The sequence spans 782 residues: Glucocorticoid receptor (782 aa).

A disordered region spans residues 1–20 (MDPKESLTPPSREEIPSSVL). The tract at residues 1-425 (MDPKESLTPP…SAATGPPPKL (425 aa)) is modulating. Threonine 8 bears the Phosphothreonine mark. Residue arginine 24 is modified to Omega-N-methylarginine. The residue at position 46 (serine 46) is a Phosphoserine. A disordered region spans residues 48 to 79 (SLAAVSQPDSKQQRLAVDFPKGSGSNAQQPDL). Serine 114, serine 135, serine 142, serine 208, serine 216, and serine 231 each carry phosphoserine. The interval 130-184 (LSRSTSVPENPKSSASAAGPAAPAEKAFPKTHSDGAPEQPNVKGQTGTNGGNVKL) is disordered. A compositionally biased stretch (low complexity) spans 140 to 155 (PKSSASAAGPAAPAEK). A Glycyl lysine isopeptide (Lys-Gly) (interchain with G-Cter in SUMO2) cross-link involves residue lysine 263. The residue at position 272 (serine 272) is a Phosphoserine. Glycyl lysine isopeptide (Lys-Gly) (interchain with G-Cter in SUMO); alternate cross-links involve residues lysine 282 and lysine 298. Residues lysine 282 and lysine 298 each participate in a glycyl lysine isopeptide (Lys-Gly) (interchain with G-Cter in SUMO2); alternate cross-link. 2 positions are modified to phosphoserine: serine 312 and serine 410. Lysine 424 is covalently cross-linked (Glycyl lysine isopeptide (Lys-Gly) (interchain with G-Cter in ubiquitin)). 2 NR C4-type zinc fingers span residues 426-446 (CLVC…CGSC) and 462-486 (CAGR…YRKC). Residues 426–491 (CLVCSDEASG…RYRKCLQAGM (66 aa)) constitute a DNA-binding region (nuclear receptor). N6-acetyllysine is present on residues lysine 485, lysine 497, lysine 499, and lysine 500. Residues 490–782 (GMNLEARKTK…NIKKLLFHQK (293 aa)) are interaction with CLOCK. Positions 492–528 (NLEARKTKKKIKGIQQATTGVSQETSENSANKTIVPA) are hinge. In terms of domain architecture, NR LBD spans 529 to 763 (TLPQLTPTLV…FPEMLAEIIT (235 aa)). Residues 537 to 702 (LVSLLEVIEP…EIRMTYIKEL (166 aa)) form an interaction with CRY1 region. Lysine 708 is covalently cross-linked (Glycyl lysine isopeptide (Lys-Gly) (interchain with G-Cter in SUMO)).

This sequence belongs to the nuclear hormone receptor family. NR3 subfamily. In terms of assembly, heteromultimeric cytoplasmic complex with HSP90AA1, HSPA1A/HSPA1B, and FKBP5 or another immunophilin such as PPID, STIP1, or the immunophilin homolog PPP5C. Upon ligand binding FKBP5 dissociates from the complex and FKBP4 takes its place, thereby linking the complex to dynein and mediating transport to the nucleus, where the complex dissociates. Probably forms a complex composed of chaperones HSP90 and HSP70, co-chaperones CDC37, PPP5C, TSC1 and client protein TSC2, CDK4, AKT, RAF1 and NR3C1; this complex does not contain co-chaperones STIP1/HOP and PTGES3/p23. Directly interacts with UNC45A. Binds to DNA as a homodimer, and as heterodimer with NR3C2 or the retinoid X receptor. Binds STAT5A and STAT5B homodimers and heterodimers. Interacts with NRIP1, POU2F1, POU2F2 and TRIM28. Interacts with several coactivator complexes, including the SMARCA4 complex, CREBBP/EP300, TADA2L (Ada complex) and p160 coactivators such as NCOA2 and NCOA6. Interaction with BAG1 inhibits transactivation. Interacts with HEXIM1 and TGFB1I1. Interacts with NCOA1. Interacts with NCOA3, SMARCA4, SMARCC1, SMARCD1, and SMARCE1. Interacts with CLOCK, CRY1 and CRY2 in a ligand-dependent fashion. Interacts with CIART. Interacts with RWDD3. Interacts with UBE2I/UBC9 and this interaction is enhanced in the presence of RWDD3. Interacts with GRIP1. Interacts with NR4A3 (via nuclear receptor DNA-binding domain), represses transcription activity of NR4A3 on the POMC promoter Nur response element (NurRE). Directly interacts with PNRC2 to attract and form a complex with UPF1 and DCP1A; the interaction leads to rapid mRNA degradation. Interacts with GSK3B. Interacts with FNIP1 and FNIP2. Interacts (via C-terminus) with HNRNPU (via C-terminus). Interacts with MCM3AP. Interacts (via domain NR LBD) with HSP90AA1 and HSP90AB1. In the absence of hormonal ligand, interacts with TACC1. Interacts (via NR LBD domain) with ZNF764 (via KRAB domain); the interaction regulates transcription factor activity of NR3C1 by directing its actions toward certain biologic pathways. Post-translationally, acetylation by CLOCK reduces its binding to glucocorticoid response elements and its transcriptional activity. In terms of processing, increased proteasome-mediated degradation in response to glucocorticoids. Phosphorylated in the absence of hormone; becomes hyperphosphorylated in the presence of glucocorticoid. The Ser-208, Ser-231 and Ser-410-phosphorylated forms are mainly cytoplasmic, and the Ser-216-phosphorylated form is nuclear. Phosphorylation at Ser-216 increases transcriptional activity. Phosphorylation at Ser-208, Ser-231 and Ser-410 decreases signaling capacity. Phosphorylation at Ser-410 may protect from glucocorticoid-induced apoptosis. Phosphorylation at Ser-208 and Ser-216 is not required in regulation of chromosome segregation. May be dephosphorylated by PPP5C, attenuates NR3C1 action. Post-translationally, ubiquitinated by UBR5, leading to its degradation: UBR5 specifically recognizes and binds ligand-bound NR3C1 when it is not associated with coactivators (NCOAs). In presence of NCOAs, the UBR5-degron is not accessible, preventing its ubiquitination and degradation. In terms of processing, sumoylation at Lys-282 and Lys-298 negatively regulates its transcriptional activity. Sumoylation at Lys-708 positively regulates its transcriptional activity in the presence of RWDD3. Sumoylation at Lys-282 and Lys-298 is dispensable whereas sumoylation at Lys-708 is critical for the stimulatory effect of RWDD3 on its transcriptional activity. Heat shock increases sumoylation in a RWDD3-dependent manner.

The protein localises to the cytoplasm. It is found in the nucleus. Its subcellular location is the mitochondrion. The protein resides in the cytoskeleton. It localises to the spindle. The protein localises to the microtubule organizing center. It is found in the centrosome. Its subcellular location is the chromosome. The protein resides in the nucleoplasm. Its function is as follows. Receptor for glucocorticoids (GC). Has a dual mode of action: as a transcription factor that binds to glucocorticoid response elements (GRE), both for nuclear and mitochondrial DNA, and as a modulator of other transcription factors. Affects inflammatory responses, cellular proliferation and differentiation in target tissues. Involved in chromatin remodeling. Plays a role in rapid mRNA degradation by binding to the 5' UTR of target mRNAs and interacting with PNRC2 in a ligand-dependent manner which recruits the RNA helicase UPF1 and the mRNA-decapping enzyme DCP1A, leading to RNA decay. Could act as a coactivator for STAT5-dependent transcription upon growth hormone (GH) stimulation and could reveal an essential role of hepatic GR in the control of body growth. Mediates glucocorticoid-induced apoptosis. Promotes accurate chromosome segregation during mitosis. May act as a tumor suppressor. May play a negative role in adipogenesis through the regulation of lipolytic and antilipogenic gene expression. This is Glucocorticoid receptor (NR3C1) from Sus scrofa (Pig).